The primary structure comprises 367 residues: Phosphoribosylaminoimidazole-succinocarboxamide synthase (367 aa).

The protein belongs to the SAICAR synthetase family.

The catalysed reaction is 5-amino-1-(5-phospho-D-ribosyl)imidazole-4-carboxylate + L-aspartate + ATP = (2S)-2-[5-amino-1-(5-phospho-beta-D-ribosyl)imidazole-4-carboxamido]succinate + ADP + phosphate + 2 H(+). It functions in the pathway purine metabolism; IMP biosynthesis via de novo pathway; 5-amino-1-(5-phospho-D-ribosyl)imidazole-4-carboxamide from 5-amino-1-(5-phospho-D-ribosyl)imidazole-4-carboxylate: step 1/2. The chain is Phosphoribosylaminoimidazole-succinocarboxamide synthase from Aliivibrio salmonicida (strain LFI1238) (Vibrio salmonicida (strain LFI1238)).